The following is a 504-amino-acid chain: Maturase K (504 aa).

Belongs to the intron maturase 2 family. MatK subfamily.

It is found in the plastid. The protein resides in the chloroplast. Usually encoded in the trnK tRNA gene intron. Probably assists in splicing its own and other chloroplast group II introns. This is Maturase K from Quercus petraea (Durmast oak).